The chain runs to 386 residues: Lipoyl synthase, mitochondrial (386 aa).

Residues 1–48 form a disordered region; that stretch reads MHGRRHLAASLTRALTQAPSRSISSTPSLLQTLDPSVPSPSPPPAAEP. Positions 13–34 are enriched in polar residues; it reads RALTQAPSRSISSTPSLLQTLD. Over residues 37 to 46 the composition is skewed to pro residues; sequence VPSPSPPPAA. Residues C113, C118, C124, C144, C148, C151, and S360 each contribute to the [4Fe-4S] cluster site. Residues 129–349 form the Radical SAM core domain; it reads ETGTATATIM…RALGVEMGFR (221 aa).

Belongs to the radical SAM superfamily. Lipoyl synthase family. [4Fe-4S] cluster serves as cofactor.

Its subcellular location is the mitochondrion. It carries out the reaction [[Fe-S] cluster scaffold protein carrying a second [4Fe-4S](2+) cluster] + N(6)-octanoyl-L-lysyl-[protein] + 2 oxidized [2Fe-2S]-[ferredoxin] + 2 S-adenosyl-L-methionine + 4 H(+) = [[Fe-S] cluster scaffold protein] + N(6)-[(R)-dihydrolipoyl]-L-lysyl-[protein] + 4 Fe(3+) + 2 hydrogen sulfide + 2 5'-deoxyadenosine + 2 L-methionine + 2 reduced [2Fe-2S]-[ferredoxin]. It participates in protein modification; protein lipoylation via endogenous pathway; protein N(6)-(lipoyl)lysine from octanoyl-[acyl-carrier-protein]: step 2/2. Functionally, catalyzes the radical-mediated insertion of two sulfur atoms into the C-6 and C-8 positions of the octanoyl moiety bound to the lipoyl domains of lipoate-dependent enzymes, thereby converting the octanoylated domains into lipoylated derivatives. In Sorghum bicolor (Sorghum), this protein is Lipoyl synthase, mitochondrial.